Consider the following 241-residue polypeptide: Chaperone protein FimC (241 aa).

Residues 1 to 36 (MSNKNVNVRKSQEITFCLLAGILMFMAMMVAGRAEA) form the signal peptide.

It belongs to the periplasmic pilus chaperone family.

It is found in the periplasm. Functionally, required for the biogenesis of type 1 fimbriae. Binds and interact with FimH. This Escherichia coli (strain K12) protein is Chaperone protein FimC (fimC).